We begin with the raw amino-acid sequence, 422 residues long: Testin (422 aa).

The region spanning 92–199 (MILTSPVAAK…GDVKLPKEVE (108 aa)) is the PET domain. The interval 135 to 165 (QPVAGSEGAQYRKKQLAKQLPAHDQDPSKCH) is disordered. The span at 155-165 (PAHDQDPSKCH) shows a compositional bias: basic and acidic residues. 3 LIM zinc-binding domains span residues 234–299 (YYCF…SEKP), 300–359 (RCAG…NHAV), and 360–422 (SCQG…KMSS).

It belongs to the prickle / espinas / testin family. Expressed in the animal hemisphere at the 4-cell stage. By stage 18, expressed in cells adjacent to the anterior neural plate. In late neurula, expressed in the cranial neural crest. At tail bud stages, expressed strongly in the head, ventral to the developing eye, branchial arches and lateral line placodes. Also localized in the otic vesicle, dorsal fin and notochord with weaker expression at intersomitic junctions of tail bud embryos.

Its subcellular location is the cytoplasm. The protein localises to the cell cortex. It is found in the cell junction. The protein resides in the focal adhesion. Scaffold protein that may play a role in cell adhesion, cell spreading and in the reorganization of the actin cytoskeleton. May inhibit cell growth. Regulates cranial neural crest migration. Acts together with prickle1 to control axial elongation. This is Testin from Xenopus laevis (African clawed frog).